The sequence spans 272 residues: Eukaryotic translation initiation factor 3 subunit G (272 aa).

Disordered stretches follow at residues 1 to 28 and 143 to 187; these read MPAL…PTEI and AGKA…RGRD. An RRM domain is found at 190–268; it reads TAIRISNLSE…LILNVEWSKP (79 aa).

This sequence belongs to the eIF-3 subunit G family. As to quaternary structure, component of the eukaryotic translation initiation factor 3 (eIF-3) complex.

The protein localises to the cytoplasm. RNA-binding component of the eukaryotic translation initiation factor 3 (eIF-3) complex, which is involved in protein synthesis of a specialized repertoire of mRNAs and, together with other initiation factors, stimulates binding of mRNA and methionyl-tRNAi to the 40S ribosome. The eIF-3 complex specifically targets and initiates translation of a subset of mRNAs involved in cell proliferation. This subunit can bind 18S rRNA. This is Eukaryotic translation initiation factor 3 subunit G from Culex quinquefasciatus (Southern house mosquito).